The sequence spans 1430 residues: DNA-directed RNA polymerase subunit beta' (1430 aa).

Zn(2+)-binding residues include Cys70, Cys72, Cys85, and Cys88. Asp495, Asp497, and Asp499 together coordinate Mg(2+). Zn(2+) is bound by residues Cys838, Cys912, Cys919, and Cys922.

This sequence belongs to the RNA polymerase beta' chain family. As to quaternary structure, the RNAP catalytic core consists of 2 alpha, 1 beta, 1 beta' and 1 omega subunit. When a sigma factor is associated with the core the holoenzyme is formed, which can initiate transcription. Requires Mg(2+) as cofactor. Zn(2+) is required as a cofactor.

The enzyme catalyses RNA(n) + a ribonucleoside 5'-triphosphate = RNA(n+1) + diphosphate. In terms of biological role, DNA-dependent RNA polymerase catalyzes the transcription of DNA into RNA using the four ribonucleoside triphosphates as substrates. The chain is DNA-directed RNA polymerase subunit beta' from Rhodospirillum centenum (strain ATCC 51521 / SW).